Consider the following 389-residue polypeptide: UDP-N-acetylglucosamine--N-acetylmuramyl-(pentapeptide) pyrophosphoryl-undecaprenol N-acetylglucosamine transferase (389 aa).

Residues 17–19 (TAG), Asn-137, Arg-179, Ser-213, and Gln-308 each bind UDP-N-acetyl-alpha-D-glucosamine.

It belongs to the glycosyltransferase 28 family. MurG subfamily.

It is found in the cell membrane. It carries out the reaction di-trans,octa-cis-undecaprenyl diphospho-N-acetyl-alpha-D-muramoyl-L-alanyl-D-glutamyl-meso-2,6-diaminopimeloyl-D-alanyl-D-alanine + UDP-N-acetyl-alpha-D-glucosamine = di-trans,octa-cis-undecaprenyl diphospho-[N-acetyl-alpha-D-glucosaminyl-(1-&gt;4)]-N-acetyl-alpha-D-muramoyl-L-alanyl-D-glutamyl-meso-2,6-diaminopimeloyl-D-alanyl-D-alanine + UDP + H(+). Its pathway is cell wall biogenesis; peptidoglycan biosynthesis. In terms of biological role, cell wall formation. Catalyzes the transfer of a GlcNAc subunit on undecaprenyl-pyrophosphoryl-MurNAc-pentapeptide (lipid intermediate I) to form undecaprenyl-pyrophosphoryl-MurNAc-(pentapeptide)GlcNAc (lipid intermediate II). This chain is UDP-N-acetylglucosamine--N-acetylmuramyl-(pentapeptide) pyrophosphoryl-undecaprenol N-acetylglucosamine transferase, found in Rhodococcus erythropolis (strain PR4 / NBRC 100887).